A 252-amino-acid chain; its full sequence is Protein AGAMOUS-LIKE 6 (252 aa).

The region spanning 1–61 (MGRGRVELKR…GKLYEFGSAG (61 aa)) is the MADS-box domain. Short sequence motifs (nuclear localization signal) lie at residues 8–15 (LKRIENKI) and 138–145 (QRKTQIMM). A K-box domain is found at 85–175 (TQSWYQEVSK…KIKVSLELSS (91 aa)).

As to expression, restricted to flowers.

The protein resides in the nucleus. Functionally, probable transcription factor involved in fruit development. Key regulator of the transition between the state of 'ovary arrest' imposed towards anthesis and the fertilization-triggered fruit set. In Solanum lycopersicum (Tomato), this protein is Protein AGAMOUS-LIKE 6.